The sequence spans 216 residues: 4-hydroxy-tetrahydrodipicolinate reductase (216 aa).

NAD(+) is bound by residues 7–12 (GYSGRM), 71–73 (GTT), and 95–98 (AYNF). Catalysis depends on His-127, which acts as the Proton donor/acceptor. His-128 is a binding site for (S)-2,3,4,5-tetrahydrodipicolinate. The active-site Proton donor is the Lys-131. 137-138 (GT) lines the (S)-2,3,4,5-tetrahydrodipicolinate pocket.

It belongs to the DapB family.

The protein localises to the cytoplasm. The catalysed reaction is (S)-2,3,4,5-tetrahydrodipicolinate + NAD(+) + H2O = (2S,4S)-4-hydroxy-2,3,4,5-tetrahydrodipicolinate + NADH + H(+). The enzyme catalyses (S)-2,3,4,5-tetrahydrodipicolinate + NADP(+) + H2O = (2S,4S)-4-hydroxy-2,3,4,5-tetrahydrodipicolinate + NADPH + H(+). The protein operates within amino-acid biosynthesis; L-lysine biosynthesis via DAP pathway; (S)-tetrahydrodipicolinate from L-aspartate: step 4/4. Catalyzes the conversion of 4-hydroxy-tetrahydrodipicolinate (HTPA) to tetrahydrodipicolinate. This Thermotoga sp. (strain RQ2) protein is 4-hydroxy-tetrahydrodipicolinate reductase.